Here is a 320-residue protein sequence, read N- to C-terminus: Thioredoxin reductase (320 aa).

An FAD-binding site is contributed by 36 to 43; sequence TGMEQGGQ. Cys-136 and Cys-139 are oxidised to a cystine. Position 287–296 (287–296) interacts with FAD; the sequence is DVTDHVYRQA.

Belongs to the class-II pyridine nucleotide-disulfide oxidoreductase family. In terms of assembly, homodimer. Requires FAD as cofactor.

Its subcellular location is the cytoplasm. The catalysed reaction is [thioredoxin]-dithiol + NADP(+) = [thioredoxin]-disulfide + NADPH + H(+). This Coxiella burnetii (strain RSA 493 / Nine Mile phase I) protein is Thioredoxin reductase (trxB).